A 39-amino-acid chain; its full sequence is Cytochrome b559 subunit beta (39 aa).

A helical membrane pass occupies residues Trp-14–Ser-30. His-18 contributes to the heme binding site.

The protein belongs to the PsbE/PsbF family. In terms of assembly, heterodimer of an alpha subunit and a beta subunit. PSII is composed of 1 copy each of membrane proteins PsbA, PsbB, PsbC, PsbD, PsbE, PsbF, PsbH, PsbI, PsbJ, PsbK, PsbL, PsbM, PsbT, PsbX, PsbY, PsbZ, Psb30/Ycf12, at least 3 peripheral proteins of the oxygen-evolving complex and a large number of cofactors. It forms dimeric complexes. Heme b serves as cofactor.

The protein resides in the plastid. Its subcellular location is the chloroplast thylakoid membrane. Functionally, this b-type cytochrome is tightly associated with the reaction center of photosystem II (PSII). PSII is a light-driven water:plastoquinone oxidoreductase that uses light energy to abstract electrons from H(2)O, generating O(2) and a proton gradient subsequently used for ATP formation. It consists of a core antenna complex that captures photons, and an electron transfer chain that converts photonic excitation into a charge separation. This Welwitschia mirabilis (Tree tumbo) protein is Cytochrome b559 subunit beta.